The chain runs to 295 residues: Ribosomal RNA small subunit methyltransferase A (295 aa).

The S-adenosyl-L-methionine site is built by N29, L31, G56, E77, D102, and N128.

This sequence belongs to the class I-like SAM-binding methyltransferase superfamily. rRNA adenine N(6)-methyltransferase family. RsmA subfamily.

It is found in the cytoplasm. It catalyses the reaction adenosine(1518)/adenosine(1519) in 16S rRNA + 4 S-adenosyl-L-methionine = N(6)-dimethyladenosine(1518)/N(6)-dimethyladenosine(1519) in 16S rRNA + 4 S-adenosyl-L-homocysteine + 4 H(+). Its function is as follows. Specifically dimethylates two adjacent adenosines (A1518 and A1519) in the loop of a conserved hairpin near the 3'-end of 16S rRNA in the 30S particle. May play a critical role in biogenesis of 30S subunits. The sequence is that of Ribosomal RNA small subunit methyltransferase A from Listeria monocytogenes serotype 4b (strain CLIP80459).